The following is a 597-amino-acid chain: Elongation factor 4 (597 aa).

Residues 2–184 (NNIRNFSIIA…ALIAKVPPPK (183 aa)) form the tr-type G domain. Residues 14 to 19 (DHGKST) and 131 to 134 (NKID) contribute to the GTP site.

The protein belongs to the TRAFAC class translation factor GTPase superfamily. Classic translation factor GTPase family. LepA subfamily.

The protein localises to the cell inner membrane. The enzyme catalyses GTP + H2O = GDP + phosphate + H(+). In terms of biological role, required for accurate and efficient protein synthesis under certain stress conditions. May act as a fidelity factor of the translation reaction, by catalyzing a one-codon backward translocation of tRNAs on improperly translocated ribosomes. Back-translocation proceeds from a post-translocation (POST) complex to a pre-translocation (PRE) complex, thus giving elongation factor G a second chance to translocate the tRNAs correctly. Binds to ribosomes in a GTP-dependent manner. The chain is Elongation factor 4 from Herminiimonas arsenicoxydans.